A 515-amino-acid polypeptide reads, in one-letter code: Bifunctional purine biosynthesis protein PurH (515 aa).

An MGS-like domain is found at 1 to 145; sequence MTKRALISVS…KNHASVTVVV (145 aa).

This sequence belongs to the PurH family.

The enzyme catalyses (6R)-10-formyltetrahydrofolate + 5-amino-1-(5-phospho-beta-D-ribosyl)imidazole-4-carboxamide = 5-formamido-1-(5-phospho-D-ribosyl)imidazole-4-carboxamide + (6S)-5,6,7,8-tetrahydrofolate. It carries out the reaction IMP + H2O = 5-formamido-1-(5-phospho-D-ribosyl)imidazole-4-carboxamide. Its pathway is purine metabolism; IMP biosynthesis via de novo pathway; 5-formamido-1-(5-phospho-D-ribosyl)imidazole-4-carboxamide from 5-amino-1-(5-phospho-D-ribosyl)imidazole-4-carboxamide (10-formyl THF route): step 1/1. It participates in purine metabolism; IMP biosynthesis via de novo pathway; IMP from 5-formamido-1-(5-phospho-D-ribosyl)imidazole-4-carboxamide: step 1/1. The chain is Bifunctional purine biosynthesis protein PurH from Streptococcus uberis (strain ATCC BAA-854 / 0140J).